We begin with the raw amino-acid sequence, 275 residues long: Translation initiation factor 2 subunit alpha (275 aa).

The S1 motif domain maps to 12–83; sequence GEFVVATVKR…RKGHIDLSLR (72 aa).

The protein belongs to the eIF-2-alpha family. In terms of assembly, heterotrimer composed of an alpha, a beta and a gamma chain.

EIF-2 functions in the early steps of protein synthesis by forming a ternary complex with GTP and initiator tRNA. This is Translation initiation factor 2 subunit alpha (eif2a) from Pyrococcus horikoshii (strain ATCC 700860 / DSM 12428 / JCM 9974 / NBRC 100139 / OT-3).